A 760-amino-acid polypeptide reads, in one-letter code: Amyloid beta precursor protein binding family B member 2 (760 aa).

Phosphoserine is present on residues serine 123 and serine 160. Disordered stretches follow at residues 177–295 (QNLG…LPPG) and 324–351 (PADLHGSRKGSLSSVTPSPTPENEKQPW). 2 stretches are compositionally biased toward polar residues: residues 212–230 (NKPQSSPEDGQVATVSSSP) and 261–275 (SWTTLSQDSASPSSP). One can recognise a WW domain in the interval 290 to 322 (PDLPPGWKRVNDIAGTYYWHIPTGTTQWERPVS). A phosphoserine mark is found at serine 334, serine 409, and serine 412. PID domains lie at 413–580 (DPEA…LQVD) and 586–738 (TELV…VTTN).

In terms of assembly, interacts (via C-terminus) with APP (via C-terminus). Interacts with APLP2 (via cytoplasmic domain). In terms of tissue distribution, expressed in the brain, retinal lens and muscle cells (at protein level).

It localises to the endoplasmic reticulum. The protein localises to the golgi apparatus. Its subcellular location is the early endosome. Plays a role in the maintenance of lens transparency, and may also play a role in muscle cell strength. Involved in hippocampal neurite branching and neuromuscular junction formation, as a result plays a role in spatial memory functioning. Activates transcription of APP. The protein is Amyloid beta precursor protein binding family B member 2 of Mus musculus (Mouse).